The chain runs to 64 residues: Large ribosomal subunit protein uL29 (64 aa).

Belongs to the universal ribosomal protein uL29 family.

In Thiobacillus denitrificans (strain ATCC 25259 / T1), this protein is Large ribosomal subunit protein uL29.